We begin with the raw amino-acid sequence, 138 residues long: Small ribosomal subunit protein uS11c (138 aa).

The segment at 1-22 (MAKSIPRISSRRNGPIGSGKTV) is disordered.

The protein belongs to the universal ribosomal protein uS11 family. In terms of assembly, part of the 30S ribosomal subunit.

The protein localises to the plastid. The chain is Small ribosomal subunit protein uS11c from Cuscuta exaltata (Tall dodder).